A 1087-amino-acid chain; its full sequence is Exoglucanase XynX (1087 aa).

Positions 1–30 (MKNNLSKFVSIFTAFIMIFGTSLFFPHVSA) are cleaved as a signal peptide. The CBM-cenC domain occupies 37-188 (ANLVSNGDFE…YIDDVVVTPQ (152 aa)). A GH10 domain is found at 204 to 527 (QNDIPDLSSV…KPAYWAIADP (324 aa)). The active-site Proton donor is the E347. D389 is an active-site residue. E452 functions as the Nucleophile in the catalytic mechanism. SLH domains lie at 903 to 966 (KKSV…YNGE), 967 to 1025 (FSDV…KEEN), and 1028 to 1087 (ATSF…SNNL).

Belongs to the glycosyl hydrolase 10 (cellulase F) family.

It catalyses the reaction Hydrolysis of (1-&gt;4)-beta-D-glucosidic linkages in cellulose and cellotetraose, releasing cellobiose from the non-reducing ends of the chains.. The chain is Exoglucanase XynX (xynX) from Acetivibrio thermocellus (Hungateiclostridium thermocellum).